The sequence spans 623 residues: Quinoprotein ethanol dehydrogenase (623 aa).

The signal sequence occupies residues 1-34 (MTTRTSPAPAGLLRPSLHCLAFAVALGSAGAALA). Residues Asp-45, Thr-48, and Asp-51 each coordinate Ca(2+). Residue Glu-95 participates in pyrroloquinoline quinone binding. Cys-139 and Cys-140 form a disulfide bridge. Residues Arg-145, Thr-189, and 207 to 209 (HGS) each bind pyrroloquinoline quinone. A Ca(2+)-binding site is contributed by Glu-213. Residues 244 to 281 (LNGKDSTVTGDVKAPSWPDDRNSPTGKVESWSHGGGAP) form a disordered region. Ca(2+) contacts are provided by Asn-300 and Asp-350. Asp-350 serves as the catalytic Proton acceptor. Arg-378 serves as a coordination point for pyrroloquinoline quinone. The disordered stretch occupies residues 413-434 (GRPVEREGQRPPLPEPGQKHGK). Trp-523 and Ala-587 together coordinate pyrroloquinoline quinone.

It belongs to the bacterial PQQ dehydrogenase family. In terms of assembly, homodimer. Interacts with cytochrome c550. Requires pyrroloquinoline quinone as cofactor. Ca(2+) serves as cofactor. The disulfide ring formed between the two adjacent cysteine residues Cys-139 and Cys-140 is essential for efficient electron transfer at pH 7 from QEDH to its natural electron acceptor cytochrome c550.

It is found in the periplasm. It catalyses the reaction a primary alcohol + 2 Fe(III)-[cytochrome c] = an aldehyde + 2 Fe(II)-[cytochrome c] + 2 H(+). The enzyme catalyses ethanol + 2 Fe(III)-[cytochrome c] = acetaldehyde + 2 Fe(II)-[cytochrome c] + 2 H(+). It carries out the reaction butan-1-ol + 2 Fe(III)-[cytochrome c] = butanal + 2 Fe(II)-[cytochrome c] + 2 H(+). The catalysed reaction is propan-2-ol + 2 Fe(III)-[cytochrome c] = acetone + 2 Fe(II)-[cytochrome c] + 2 H(+). It catalyses the reaction 1-propanol + 2 Fe(III)-[cytochrome c] = propanal + 2 Fe(II)-[cytochrome c] + 2 H(+). It participates in alcohol metabolism; ethanol degradation; acetate from ethanol: step 1/2. Its activity is regulated as follows. Inhibited by cyclopropanone ethylhemiketal. Activated by ammonia (500mM), methylamine (5mM), ethylamine (5mM), octylamine (5mM), ethanolamine (5mM) and 1-amino-2-propanol (5mM), in assays using artificial electron acceptors. Ammonia is not needed for, nor does it stimulate, the ethanol-oxidizing activity when using the natural electron acceptor cytochrome c550. Functionally, catalyzes the oxidation of ethanol and other primary alcohols to the corresponding aldehydes, except methanol, which is a very poor substrate. Uses a specific inducible cytochrome c550, encoded by the adjacent gene in the locus, as electron acceptor. Is a key enzyme of the carbon and energy metabolism during growth of P.aeruginosa on ethanol as the sole carbon and energy source. Is also able to use secondary alcohols as well as aminoalcohols like ethanolamine and 1-amino-2-propanol, and aldehydes as substrates. This Pseudomonas aeruginosa (strain ATCC 15692 / DSM 22644 / CIP 104116 / JCM 14847 / LMG 12228 / 1C / PRS 101 / PAO1) protein is Quinoprotein ethanol dehydrogenase.